A 124-amino-acid polypeptide reads, in one-letter code: Mini zinc finger protein 4 (124 aa).

The ZF-HD dimerization-type; degenerate zinc finger occupies 35–84; that stretch reads YGECRRNHAARMGGHAVDGCREFLAEGEEGTGGALRCAACGCHRSFHRRV.

Homo- and heterodimers.

It is found in the cytoplasm. In terms of biological role, inhibits zinc finger homeodomain (ZHD) transcription factors, by interacting with them to prevent both their nuclear localization and their DNA-binding properties. In Oryza sativa subsp. japonica (Rice), this protein is Mini zinc finger protein 4 (MIF4).